Here is a 1722-residue protein sequence, read N- to C-terminus: Formin-2 (1722 aa).

2 stretches are compositionally biased toward basic and acidic residues: residues 1 to 17 (MGNQ…DALH) and 27 to 36 (LGPRDVEATK). Disordered stretches follow at residues 1–104 (MGNQ…QALQ), 126–189 (DEAG…FHSA), and 207–475 (QQQQ…DGGL). The span at 51–60 (GGGGGGGGGE) shows a compositional bias: gly residues. Residues 61 to 70 (SGKKKSKSDS) are compositionally biased toward basic and acidic residues. Ser-93 is subject to Phosphoserine. Over residues 172-182 (GQRTSSGSDTD) the composition is skewed to polar residues. Residues 193-231 (EDLLSDIQQAIRLQQQQQQQLQLQLQQQQQQQQLQGAEE) are a coiled coil. 2 stretches are compositionally biased toward low complexity: residues 207-227 (QQQQ…QQLQ) and 322-342 (AFPF…VRGA). Residues 344–355 (DTDEEGEEDAFE) are compositionally biased toward acidic residues. Composition is skewed to low complexity over residues 389–404 (PDAP…PAPS) and 427–441 (SSPN…NQSP). A phosphoserine mark is found at Ser-482 and Ser-516. The tract at residues 612-663 (DYSEGQFPRRVPSMGPPSKPPDEEHRLEDAETESQSAVSETPQKRSDAVQKE) is disordered. 2 stretches are compositionally biased toward basic and acidic residues: residues 631-640 (PPDEEHRLED) and 653-663 (PQKRSDAVQKE). A coiled-coil region spans residues 670–706 (EGQATVIQQLEQTIEDLRTKIAELERQYPALDTEVAS). Positions 758 to 1268 (PPVDGLPGRP…VCGFLPPPLP (511 aa)) constitute an FH1 domain. The segment at 797 to 1252 (QLDSHQPTQS…PPLLPQVGSS (456 aa)) is disordered. Polar residues-rich tracts occupy residues 821–838 (GQGQ…TEFQ) and 845–855 (VSSAFKNSCNI). The segment covering 897–1246 (PQPPPLQGTE…LLPVSGPPLL (350 aa)) has biased composition (pro residues). The FH2 domain maps to 1283-1698 (RKQPIEPCRP…KEAEEVCRQK (416 aa)). Coiled-coil stretches lie at residues 1567 to 1597 (QASQ…AGKV) and 1677 to 1699 (KKEN…RQKK). The tract at residues 1715–1722 (KAKISMKT) is important for interaction with SPIRE1.

Belongs to the formin homology family. Cappuccino subfamily. In terms of assembly, interacts with SPIRE1. Binds actin. Interacts with CDKN1A. In terms of tissue distribution, expressed almost exclusively in the developing and mature central nervous system.

Its subcellular location is the cytoplasm. It localises to the cytoskeleton. The protein localises to the cytosol. It is found in the perinuclear region. The protein resides in the nucleus. Its subcellular location is the nucleolus. It localises to the cell membrane. The protein localises to the cytoplasmic vesicle membrane. It is found in the cell cortex. Actin-binding protein that is involved in actin cytoskeleton assembly and reorganization. Acts as an actin nucleation factor and promotes assembly of actin filaments together with SPIRE1 and SPIRE2. Involved in intracellular vesicle transport along actin fibers, providing a novel link between actin cytoskeleton dynamics and intracellular transport. Required for asymmetric spindle positioning, asymmetric oocyte division and polar body extrusion during female germ cell meiosis. Plays a role in responses to DNA damage, cellular stress and hypoxia by protecting CDKN1A against degradation, and thereby plays a role in stress-induced cell cycle arrest. Also acts in the nucleus: together with SPIRE1 and SPIRE2, promotes assembly of nuclear actin filaments in response to DNA damage in order to facilitate movement of chromatin and repair factors after DNA damage. Protects cells against apoptosis by protecting CDKN1A against degradation. This chain is Formin-2 (FMN2), found in Homo sapiens (Human).